A 516-amino-acid polypeptide reads, in one-letter code: GMP synthase [glutamine-hydrolyzing] (516 aa).

The 191-residue stretch at 8–198 (KILILDFGSQ…VVNICGCDTL (191 aa)) folds into the Glutamine amidotransferase type-1 domain. The active-site Nucleophile is the Cys-84. Residues His-172 and Glu-174 contribute to the active site. One can recognise a GMPS ATP-PPase domain in the interval 199–391 (WNIENIIEND…LGLPYNMLYR (193 aa)). 226–232 (SGGVDSS) contributes to the ATP binding site.

As to quaternary structure, homodimer.

The enzyme catalyses XMP + L-glutamine + ATP + H2O = GMP + L-glutamate + AMP + diphosphate + 2 H(+). It participates in purine metabolism; GMP biosynthesis; GMP from XMP (L-Gln route): step 1/1. Functionally, catalyzes the synthesis of GMP from XMP. The sequence is that of GMP synthase [glutamine-hydrolyzing] from Francisella tularensis subsp. tularensis (strain WY96-3418).